The chain runs to 872 residues: Chaperone protein ClpB 2 (872 aa).

The Clp R domain occupies 6–148 (PNKFTEKAWE…AEIIKQIRGT (143 aa)). 2 repeat regions span residues 9 to 73 (FTEK…IAQQ) and 85 to 148 (LGRS…IRGT). The segment at 161 to 342 (ESLEKYGRDL…RRFQEVLVDE (182 aa)) is NBD1. 208-215 (GEPGVGKT) contributes to the ATP binding site. Positions 343 to 551 (PNVLDTISIL…IAEIISKWTG (209 aa)) are linker. The stretch at 393–527 (IDLVDEAAAK…LETQLAEQQT (135 aa)) forms a coiled coil. The NBD2 stretch occupies residues 561–772 (EKEKLLHLED…RVDETIIFHG (212 aa)). An ATP-binding site is contributed by 611 to 618 (GPTGVGKT). The segment at 773–872 (LQKSELRSIV…TSLRGDLVIV (100 aa)) is C-terminal.

It belongs to the ClpA/ClpB family. Homohexamer. The oligomerization is ATP-dependent.

The protein localises to the cytoplasm. Part of a stress-induced multi-chaperone system, it is involved in the recovery of the cell from heat-induced damage, in cooperation with DnaK, DnaJ and GrpE. Acts before DnaK, in the processing of protein aggregates. Protein binding stimulates the ATPase activity; ATP hydrolysis unfolds the denatured protein aggregates, which probably helps expose new hydrophobic binding sites on the surface of ClpB-bound aggregates, contributing to the solubilization and refolding of denatured protein aggregates by DnaK. In Synechocystis sp. (strain ATCC 27184 / PCC 6803 / Kazusa), this protein is Chaperone protein ClpB 2 (clpB2).